We begin with the raw amino-acid sequence, 295 residues long: UDP-N-acetylenolpyruvoylglucosamine reductase (295 aa).

In terms of domain architecture, FAD-binding PCMH-type spans 24 to 188; the sequence is KVGGNAEIFF…LKAIFKANKG (165 aa). Arg168 is an active-site residue. Ser217 serves as the catalytic Proton donor. The active site involves Glu287.

Belongs to the MurB family. Requires FAD as cofactor.

It is found in the cytoplasm. The enzyme catalyses UDP-N-acetyl-alpha-D-muramate + NADP(+) = UDP-N-acetyl-3-O-(1-carboxyvinyl)-alpha-D-glucosamine + NADPH + H(+). It participates in cell wall biogenesis; peptidoglycan biosynthesis. Its function is as follows. Cell wall formation. This chain is UDP-N-acetylenolpyruvoylglucosamine reductase, found in Rickettsia typhi (strain ATCC VR-144 / Wilmington).